A 401-amino-acid polypeptide reads, in one-letter code: Argininosuccinate synthase (401 aa).

9–17 (AYSGGLDTS) provides a ligand contact to ATP. Tyr-86 is a binding site for L-citrulline. An ATP-binding site is contributed by Gly-116. L-aspartate-binding residues include Thr-118, Asn-122, and Asp-123. Position 122 (Asn-122) interacts with L-citrulline. Residues Arg-126, Ser-174, Ser-183, Glu-259, and Tyr-271 each contribute to the L-citrulline site.

Belongs to the argininosuccinate synthase family. Type 1 subfamily. Homotetramer.

It localises to the cytoplasm. The catalysed reaction is L-citrulline + L-aspartate + ATP = 2-(N(omega)-L-arginino)succinate + AMP + diphosphate + H(+). It participates in amino-acid biosynthesis; L-arginine biosynthesis; L-arginine from L-ornithine and carbamoyl phosphate: step 2/3. This is Argininosuccinate synthase from Bacillus mycoides (strain KBAB4) (Bacillus weihenstephanensis).